The sequence spans 442 residues: Protein translocase subunit SecY (442 aa).

10 helical membrane passes run 24 to 44, 76 to 96, 125 to 145, 149 to 169, 178 to 198, 212 to 232, 269 to 289, 312 to 332, 363 to 383, and 385 to 405; these read FLFL…PGIN, IFAL…LMTA, VLAL…GVAF, FGFY…MMWL, VGNG…PRAI, IFAL…VVFI, VIPA…GSWF, NILL…ALMF, GVLT…CLLP, and FLVV…LIVV.

Belongs to the SecY/SEC61-alpha family. Component of the Sec protein translocase complex. Heterotrimer consisting of SecY, SecE and SecG subunits. The heterotrimers can form oligomers, although 1 heterotrimer is thought to be able to translocate proteins. Interacts with the ribosome. Interacts with SecDF, and other proteins may be involved. Interacts with SecA.

Its subcellular location is the cell inner membrane. The central subunit of the protein translocation channel SecYEG. Consists of two halves formed by TMs 1-5 and 6-10. These two domains form a lateral gate at the front which open onto the bilayer between TMs 2 and 7, and are clamped together by SecE at the back. The channel is closed by both a pore ring composed of hydrophobic SecY resides and a short helix (helix 2A) on the extracellular side of the membrane which forms a plug. The plug probably moves laterally to allow the channel to open. The ring and the pore may move independently. This chain is Protein translocase subunit SecY, found in Pseudomonas aeruginosa (strain ATCC 15692 / DSM 22644 / CIP 104116 / JCM 14847 / LMG 12228 / 1C / PRS 101 / PAO1).